A 208-amino-acid polypeptide reads, in one-letter code: MTLQTFKSTDFEVFTVDGLEERMSAIKTNIHPKLEALGEQFAAYLSKQTDENFFYHVAKHARRKVNPPNDTWVAFSTNKRGYKMLPHFQIGLWGTHAFIYFGLIYECPQKVETAHAFLEHLNDLKTNIPNDFVWSIDHTKPSVKLHKTLETEDLQKMIERLATVKKAELLVGIHISPEEFSAMTNEQFLAKIESTMQSLLPLYALCNR.

It belongs to the UPF0637 family.

The polypeptide is UPF0637 protein BCAH820_3975 (Bacillus cereus (strain AH820)).